The primary structure comprises 131 residues: Glycine cleavage system H protein (131 aa).

Positions 24 to 106 (VYCVGITEHA…YTDGWLFKIK (83 aa)) constitute a Lipoyl-binding domain. At K65 the chain carries N6-lipoyllysine.

The protein belongs to the GcvH family. As to quaternary structure, the glycine cleavage system is composed of four proteins: P, T, L and H. Requires (R)-lipoate as cofactor.

Its function is as follows. The glycine cleavage system catalyzes the degradation of glycine. The H protein shuttles the methylamine group of glycine from the P protein to the T protein. The sequence is that of Glycine cleavage system H protein from Sodalis glossinidius (strain morsitans).